The chain runs to 74 residues: Cytochrome c oxidase subunit 2 (74 aa).

Topologically, residues 1-14 (MAHPMQLGFQDAAS) are mitochondrial intermembrane. The helical transmembrane segment at 15 to 45 (PVMEELLHFHDHALMIVFLISTAVLYIIVVT) threads the bilayer. At 46–74 (VTTKLTDKYVLDAQEIEMVWTIMPAVVLI) the chain is on the mitochondrial matrix side.

It belongs to the cytochrome c oxidase subunit 2 family. As to quaternary structure, component of the cytochrome c oxidase (complex IV, CIV), a multisubunit enzyme composed of 14 subunits. The complex is composed of a catalytic core of 3 subunits MT-CO1, MT-CO2 and MT-CO3, encoded in the mitochondrial DNA, and 11 supernumerary subunits COX4I, COX5A, COX5B, COX6A, COX6B, COX6C, COX7A, COX7B, COX7C, COX8 and NDUFA4, which are encoded in the nuclear genome. The complex exists as a monomer or a dimer and forms supercomplexes (SCs) in the inner mitochondrial membrane with NADH-ubiquinone oxidoreductase (complex I, CI) and ubiquinol-cytochrome c oxidoreductase (cytochrome b-c1 complex, complex III, CIII), resulting in different assemblies (supercomplex SCI(1)III(2)IV(1) and megacomplex MCI(2)III(2)IV(2)). Found in a complex with TMEM177, COA6, COX18, COX20, SCO1 and SCO2. Interacts with TMEM177 in a COX20-dependent manner. Interacts with COX20. Interacts with COX16. It depends on Cu cation as a cofactor.

The protein localises to the mitochondrion inner membrane. It carries out the reaction 4 Fe(II)-[cytochrome c] + O2 + 8 H(+)(in) = 4 Fe(III)-[cytochrome c] + 2 H2O + 4 H(+)(out). Functionally, component of the cytochrome c oxidase, the last enzyme in the mitochondrial electron transport chain which drives oxidative phosphorylation. The respiratory chain contains 3 multisubunit complexes succinate dehydrogenase (complex II, CII), ubiquinol-cytochrome c oxidoreductase (cytochrome b-c1 complex, complex III, CIII) and cytochrome c oxidase (complex IV, CIV), that cooperate to transfer electrons derived from NADH and succinate to molecular oxygen, creating an electrochemical gradient over the inner membrane that drives transmembrane transport and the ATP synthase. Cytochrome c oxidase is the component of the respiratory chain that catalyzes the reduction of oxygen to water. Electrons originating from reduced cytochrome c in the intermembrane space (IMS) are transferred via the dinuclear copper A center (CU(A)) of subunit 2 and heme A of subunit 1 to the active site in subunit 1, a binuclear center (BNC) formed by heme A3 and copper B (CU(B)). The BNC reduces molecular oxygen to 2 water molecules using 4 electrons from cytochrome c in the IMS and 4 protons from the mitochondrial matrix. The chain is Cytochrome c oxidase subunit 2 (mt-co2) from Amia calva (Bowfin).